Consider the following 837-residue polypeptide: Enterin neuropeptides (837 aa).

An N-terminal signal peptide occupies residues 1 to 25; sequence MAKHDVTVMTLLLVVCALHVFDAQG. Positions 26–47 are excised as a propeptide; it reads TDVKLNDGFLRSGIMNIPFQRR. The residue at position 57 (Val-57) is a Valine amide. A propeptide spanning residues 61 to 134 is cleaved from the precursor; the sequence is SGFQSPVSPS…ENKRFSKENE (74 aa). Valine amide is present on Val-146. Residues 150-178 constitute a propeptide that is removed on maturation; that stretch reads MDLSALEKELIAKLKAADLLSPLETEAPG. Leu-190 is modified (leucine amide). Positions 194–201 are excised as a propeptide; the sequence is MPVDVFPR. Val-211 is modified (valine amide). Residues 215-234 constitute a propeptide that is removed on maturation; that stretch reads SGNGENYFDDLDTFGDISQR. Residue Val-244 is modified to Valine amide. A propeptide spanning residues 248–266 is cleaved from the precursor; sequence GNTDFSRNPLARLSQVQNR. Residue Val-276 is modified to Valine amide. Residues 280–285 constitute a propeptide that is removed on maturation; the sequence is SVHNIV. Val-297 carries the valine amide modification. The propeptide occupies 301 to 325; the sequence is DFEDASEGLDEEEGDIDGYSDDLDV. 18 positions are modified to valine amide: Val-336, Val-348, Val-360, Val-372, Val-384, Val-396, Val-408, Val-420, Val-432, Val-444, Val-456, Val-468, Val-480, Val-492, Val-504, Val-516, Val-528, and Val-540. Positions 544–595 are excised as a propeptide; that stretch reads ELGEDEINFLKEVDAADISRQLAEEDEKEAMVSVDDKETLSNEEDASEDDFE. Residues 567 to 594 form a disordered region; that stretch reads EEDEKEAMVSVDDKETLSNEEDASEDDF. Acidic residues predominate over residues 584–593; the sequence is SNEEDASEDD. Glu-598 carries the pyrrolidone carboxylic acid (Glu); in form ENl' modification. Val-606 carries the post-translational modification Valine amide. Residues 610 to 627 constitute a propeptide that is removed on maturation; the sequence is DEEGDMGVEMEEEMESEK. Leu-637 carries the post-translational modification Leucine amide. The residue at position 641 (Gln-641) is a Pyrrolidone carboxylic acid. Val-649 is modified (valine amide). Gln-653 is modified (pyrrolidone carboxylic acid). A valine amide mark is found at Val-661 and Val-673. Pyrrolidone carboxylic acid is present on Gln-677. A valine amide mark is found at Val-685 and Val-697. Gln-701 is modified (pyrrolidone carboxylic acid). The residue at position 709 (Val-709) is a Valine amide. Gln-713 is modified (pyrrolidone carboxylic acid). Val-721 carries the valine amide modification. At Gln-725 the chain carries Pyrrolidone carboxylic acid. The residue at position 733 (Val-733) is a Valine amide. Positions 734–837 are excised as a propeptide; that stretch reads GKRSGAEDID…DSHIMATSST (104 aa). A disordered region spans residues 772-837; it reads GQPAAANEEE…DSHIMATSST (66 aa). Residues 778-791 are compositionally biased toward acidic residues; the sequence is NEEELQQEAAEESE.

As to expression, high expression in gut and CNS.

The protein localises to the secreted. In terms of biological role, reduce interneurons B4/5 activity. May play a regulatory role in nonfeeding behaviors. The sequence is that of Enterin neuropeptides (ENPP) from Aplysia californica (California sea hare).